Reading from the N-terminus, the 272-residue chain is Glutamate racemase (272 aa).

Residues 10 to 11 (DS) and 42 to 43 (YG) contribute to the substrate site. The active-site Proton donor/acceptor is the Cys-73. Residue 74–75 (NT) participates in substrate binding. Catalysis depends on Cys-183, which acts as the Proton donor/acceptor. Position 184-185 (184-185 (TH)) interacts with substrate.

The protein belongs to the aspartate/glutamate racemases family.

It catalyses the reaction L-glutamate = D-glutamate. Its pathway is cell wall biogenesis; peptidoglycan biosynthesis. Its function is as follows. Provides the (R)-glutamate required for cell wall biosynthesis. This Leifsonia xyli subsp. xyli (strain CTCB07) protein is Glutamate racemase.